The chain runs to 610 residues: Elongation factor 4 (610 aa).

One can recognise a tr-type G domain in the interval 11–193; the sequence is EKIRNFSIIA…QIVEKVPAPT (183 aa). GTP is bound by residues 23–28 and 140–143; these read DHGKST and NKID.

This sequence belongs to the TRAFAC class translation factor GTPase superfamily. Classic translation factor GTPase family. LepA subfamily.

The protein localises to the cell membrane. It carries out the reaction GTP + H2O = GDP + phosphate + H(+). Required for accurate and efficient protein synthesis under certain stress conditions. May act as a fidelity factor of the translation reaction, by catalyzing a one-codon backward translocation of tRNAs on improperly translocated ribosomes. Back-translocation proceeds from a post-translocation (POST) complex to a pre-translocation (PRE) complex, thus giving elongation factor G a second chance to translocate the tRNAs correctly. Binds to ribosomes in a GTP-dependent manner. This is Elongation factor 4 from Streptococcus pyogenes serotype M2 (strain MGAS10270).